The sequence spans 375 residues: 2-oxoglutarate synthase subunit KorA (375 aa).

In terms of assembly, heterotetramer of the KorA, KorB, KorC and KorD subunits.

The catalysed reaction is 2 oxidized [2Fe-2S]-[ferredoxin] + 2-oxoglutarate + CoA = succinyl-CoA + 2 reduced [2Fe-2S]-[ferredoxin] + CO2 + H(+). The chain is 2-oxoglutarate synthase subunit KorA (korA) from Methanothermobacter marburgensis (strain ATCC BAA-927 / DSM 2133 / JCM 14651 / NBRC 100331 / OCM 82 / Marburg) (Methanobacterium thermoautotrophicum).